A 277-amino-acid polypeptide reads, in one-letter code: 3-methyl-2-oxobutanoate hydroxymethyltransferase (277 aa).

Residues Asp-43 and Asp-82 each contribute to the Mg(2+) site. Residues 43–44 (DS), Asp-82, and Lys-112 each bind 3-methyl-2-oxobutanoate. Residue Glu-114 coordinates Mg(2+). Catalysis depends on Glu-181, which acts as the Proton acceptor.

Belongs to the PanB family. Homodecamer; pentamer of dimers. The cofactor is Mg(2+).

The protein resides in the cytoplasm. It catalyses the reaction 3-methyl-2-oxobutanoate + (6R)-5,10-methylene-5,6,7,8-tetrahydrofolate + H2O = 2-dehydropantoate + (6S)-5,6,7,8-tetrahydrofolate. It functions in the pathway cofactor biosynthesis; (R)-pantothenate biosynthesis; (R)-pantoate from 3-methyl-2-oxobutanoate: step 1/2. In terms of biological role, catalyzes the reversible reaction in which hydroxymethyl group from 5,10-methylenetetrahydrofolate is transferred onto alpha-ketoisovalerate to form ketopantoate. The polypeptide is 3-methyl-2-oxobutanoate hydroxymethyltransferase (Listeria monocytogenes serotype 4a (strain HCC23)).